The primary structure comprises 121 residues: Fluoride-specific ion channel FluC 1 (121 aa).

4 helical membrane passes run 3–23 (YVYIFIGGALGALLRYLISFL), 35–55 (IANLTGAFVMGLLTALTIAFF), 64–84 (AITTGFLGALTTFSTFQLELI), and 92–112 (FITLLLYAVTSYVFGILLCYV). The Na(+) site is built by glycine 71 and threonine 74.

Belongs to the fluoride channel Fluc/FEX (TC 1.A.43) family.

It localises to the cell membrane. The catalysed reaction is fluoride(in) = fluoride(out). Na(+) is not transported, but it plays an essential structural role and its presence is essential for fluoride channel function. Functionally, fluoride-specific ion channel. Important for reducing fluoride concentration in the cell, thus reducing its toxicity. The chain is Fluoride-specific ion channel FluC 1 from Staphylococcus aureus (strain NCTC 8325 / PS 47).